A 62-amino-acid chain; its full sequence is Large ribosomal subunit protein uL30 (62 aa).

It belongs to the universal ribosomal protein uL30 family. Part of the 50S ribosomal subunit.

This chain is Large ribosomal subunit protein uL30, found in Hydrogenovibrio crunogenus (strain DSM 25203 / XCL-2) (Thiomicrospira crunogena).